A 230-amino-acid polypeptide reads, in one-letter code: 7-cyano-7-deazaguanine synthase (230 aa).

An ATP-binding site is contributed by 8–18 (LSGGMDSAVVT). Residues cysteine 186, cysteine 196, cysteine 199, and cysteine 202 each coordinate Zn(2+).

It belongs to the QueC family. Zn(2+) serves as cofactor.

The enzyme catalyses 7-carboxy-7-deazaguanine + NH4(+) + ATP = 7-cyano-7-deazaguanine + ADP + phosphate + H2O + H(+). It participates in purine metabolism; 7-cyano-7-deazaguanine biosynthesis. In terms of biological role, catalyzes the ATP-dependent conversion of 7-carboxy-7-deazaguanine (CDG) to 7-cyano-7-deazaguanine (preQ(0)). The polypeptide is 7-cyano-7-deazaguanine synthase (Xylella fastidiosa (strain M12)).